The sequence spans 234 residues: Large ribosomal subunit protein uL1 (234 aa).

It belongs to the universal ribosomal protein uL1 family. In terms of assembly, part of the 50S ribosomal subunit.

In terms of biological role, binds directly to 23S rRNA. The L1 stalk is quite mobile in the ribosome, and is involved in E site tRNA release. Functionally, protein L1 is also a translational repressor protein, it controls the translation of the L11 operon by binding to its mRNA. The polypeptide is Large ribosomal subunit protein uL1 (Anaeromyxobacter dehalogenans (strain 2CP-C)).